A 242-amino-acid polypeptide reads, in one-letter code: Sugar fermentation stimulation protein homolog (242 aa).

This sequence belongs to the SfsA family.

This is Sugar fermentation stimulation protein homolog from Nitratidesulfovibrio vulgaris (strain DP4) (Desulfovibrio vulgaris).